Here is a 418-residue protein sequence, read N- to C-terminus: Deubiquitinase and deneddylase Dub1 (418 aa).

The span at 1 to 10 (MLSPTNSISK) shows a compositional bias: polar residues. The segment at 1-23 (MLSPTNSISKTAPVPPQDSSKPV) is disordered. A helical transmembrane segment spans residues 40–60 (TALAVLLVVVTLGLILLFYSF). Positions 72–144 (TRPSTKEQPT…PLPPKAPKPV (73 aa)) are disordered. Pro residues predominate over residues 86-141 (VPLPSPPLAVPRPSTPPPPVISRPSTPPAPTPAISPPSTPSAPKPSTPPPLPPKAP). Residues histidine 288, aspartate 305, and cysteine 358 contribute to the active site.

The protein belongs to the peptidase C48 family.

The protein resides in the secreted. It localises to the host cell. Its subcellular location is the membrane. In terms of biological role, effector proteins function to alter host cell physiology and promote bacterial survival in host tissues. This protease possesses deubiquitinating and deneddylating activities. The chain is Deubiquitinase and deneddylase Dub1 (cdu1) from Chlamydia trachomatis serovar B (strain Jali20/OT).